Reading from the N-terminus, the 119-residue chain is Gibberellin-regulated protein 9 (119 aa).

The first 24 residues, 1-24, serve as a signal peptide directing secretion; it reads MKKMNVVAFVTLIISFLLLSQVLA.

The protein belongs to the GASA family. Six disulfide bonds may be present.

The protein localises to the secreted. In terms of biological role, gibberellin-regulated protein that may function in hormonal controlled steps of development such as seed germination, flowering and seed maturation. The chain is Gibberellin-regulated protein 9 (GASA9) from Arabidopsis thaliana (Mouse-ear cress).